The chain runs to 343 residues: CRISPR-associated endonuclease Cas1 1 (343 aa).

Mn(2+) contacts are provided by Glu166, His234, and Glu249.

This sequence belongs to the CRISPR-associated endonuclease Cas1 family. Homodimer, forms a heterotetramer with a Cas2 homodimer. Mg(2+) serves as cofactor. It depends on Mn(2+) as a cofactor.

Functionally, CRISPR (clustered regularly interspaced short palindromic repeat), is an adaptive immune system that provides protection against mobile genetic elements (viruses, transposable elements and conjugative plasmids). CRISPR clusters contain spacers, sequences complementary to antecedent mobile elements, and target invading nucleic acids. CRISPR clusters are transcribed and processed into CRISPR RNA (crRNA). Acts as a dsDNA endonuclease. Involved in the integration of spacer DNA into the CRISPR cassette. The polypeptide is CRISPR-associated endonuclease Cas1 1 (Chlorobaculum tepidum (strain ATCC 49652 / DSM 12025 / NBRC 103806 / TLS) (Chlorobium tepidum)).